The following is an 84-amino-acid chain: ATP synthase subunit c (84 aa).

2 consecutive transmembrane segments (helical) span residues 9–29 (IIAS…GFAI) and 54–74 (IVAG…LLFI).

The protein belongs to the ATPase C chain family. As to quaternary structure, F-type ATPases have 2 components, F(1) - the catalytic core - and F(0) - the membrane proton channel. F(1) has five subunits: alpha(3), beta(3), gamma(1), delta(1), epsilon(1). F(0) has three main subunits: a(1), b(2) and c(10-14). The alpha and beta chains form an alternating ring which encloses part of the gamma chain. F(1) is attached to F(0) by a central stalk formed by the gamma and epsilon chains, while a peripheral stalk is formed by the delta and b chains.

It is found in the cell inner membrane. Its function is as follows. F(1)F(0) ATP synthase produces ATP from ADP in the presence of a proton or sodium gradient. F-type ATPases consist of two structural domains, F(1) containing the extramembraneous catalytic core and F(0) containing the membrane proton channel, linked together by a central stalk and a peripheral stalk. During catalysis, ATP synthesis in the catalytic domain of F(1) is coupled via a rotary mechanism of the central stalk subunits to proton translocation. Functionally, key component of the F(0) channel; it plays a direct role in translocation across the membrane. A homomeric c-ring of between 10-14 subunits forms the central stalk rotor element with the F(1) delta and epsilon subunits. The polypeptide is ATP synthase subunit c (Pasteurella multocida (strain Pm70)).